A 201-amino-acid polypeptide reads, in one-letter code: UPF0376 protein F10G2.1 (201 aa).

Residues 1 to 3 (MKH) lie on the Cytoplasmic side of the membrane. The helical; Signal-anchor for type II membrane protein transmembrane segment at 4 to 24 (FLLLAIIGILFLGSTYGASVA) threads the bilayer. The Extracellular portion of the chain corresponds to 25–201 (TEKLKASNCT…LLECDFRNIQ (177 aa)). Asparagine 32 and asparagine 124 each carry an N-linked (GlcNAc...) asparagine glycan.

It belongs to the UPF0376 family.

It is found in the membrane. The polypeptide is UPF0376 protein F10G2.1 (Caenorhabditis elegans).